Reading from the N-terminus, the 446-residue chain is Argininosuccinate lyase (446 aa).

Belongs to the lyase 1 family. Argininosuccinate lyase subfamily.

The protein resides in the cytoplasm. The catalysed reaction is 2-(N(omega)-L-arginino)succinate = fumarate + L-arginine. Its pathway is amino-acid biosynthesis; L-arginine biosynthesis; L-arginine from L-ornithine and carbamoyl phosphate: step 3/3. This is Argininosuccinate lyase from Phocaeicola vulgatus (strain ATCC 8482 / DSM 1447 / JCM 5826 / CCUG 4940 / NBRC 14291 / NCTC 11154) (Bacteroides vulgatus).